The chain runs to 79 residues: uncharacterized protein (79 aa).

The SpoVT-AbrB domain maps to 10 to 60 (EAVLTMDSKGQILLPKELRERAGLKAGDRLVAIAGCDENEEVCCLILVKAE).

This is an uncharacterized protein from Archaeoglobus fulgidus (strain ATCC 49558 / DSM 4304 / JCM 9628 / NBRC 100126 / VC-16).